A 103-amino-acid chain; its full sequence is uncharacterized protein (103 aa).

2 stretches are compositionally biased toward polar residues: residues 1–10 (MSNSCSTSSY) and 18–28 (TRSGSNVNRNY). The segment at 1 to 28 (MSNSCSTSSYPIRRKTPTRSGSNVNRNY) is disordered.

This is an uncharacterized protein from Acanthamoeba polyphaga mimivirus (APMV).